The chain runs to 93 residues: Acylphosphatase (93 aa).

Residues 6–93 form the Acylphosphatase-like domain; that stretch reads RARIVVSGRV…GDLGAFEIRF (88 aa). Residues Arg-21 and Asn-39 contribute to the active site.

Belongs to the acylphosphatase family.

The enzyme catalyses an acyl phosphate + H2O = a carboxylate + phosphate + H(+). The sequence is that of Acylphosphatase (acyP) from Anaeromyxobacter dehalogenans (strain 2CP-C).